A 179-amino-acid chain; its full sequence is Large ribosomal subunit protein uL5 (179 aa).

The protein belongs to the universal ribosomal protein uL5 family. Part of the 50S ribosomal subunit; part of the 5S rRNA/L5/L18/L25 subcomplex. Contacts the 5S rRNA and the P site tRNA. Forms a bridge to the 30S subunit in the 70S ribosome.

Functionally, this is one of the proteins that bind and probably mediate the attachment of the 5S RNA into the large ribosomal subunit, where it forms part of the central protuberance. In the 70S ribosome it contacts protein S13 of the 30S subunit (bridge B1b), connecting the 2 subunits; this bridge is implicated in subunit movement. Contacts the P site tRNA; the 5S rRNA and some of its associated proteins might help stabilize positioning of ribosome-bound tRNAs. This is Large ribosomal subunit protein uL5 from Bacillus anthracis (strain A0248).